The primary structure comprises 363 residues: Endopolygalacturonase B (363 aa).

Positions 1–20 are cleaved as a signal peptide; that stretch reads MQLLQSSVIAATVGAALVAA. Positions 21-28 are excised as a propeptide; that stretch reads VPVELKAR. Cysteine 31 and cysteine 46 are disulfide-bonded. PbH1 repeat units lie at residues 158–187, 188–209, 210–230, 239–260, 268–290, and 302–347; these read SDNLNITDVTIDNSAGTAEGHNTDAFDVGS, STYINIDGATVYNQDDCLAINS, GSHITFTNGYCDGGHGLSIGS, VEDVTISNSKVVNSQNGVRIKT, VSNVKFEDITLSGITKYGLIVEQ, and TNGI…SITG. An N-linked (GlcNAc...) asparagine glycan is attached at asparagine 162. Aspartate 202 (proton donor) is an active-site residue. Residues cysteine 204 and cysteine 220 are joined by a disulfide bond. Residue histidine 224 is part of the active site. Intrachain disulfides connect cysteine 330-cysteine 335 and cysteine 354-cysteine 363. Asparagine 356 carries N-linked (GlcNAc...) asparagine glycosylation.

The protein belongs to the glycosyl hydrolase 28 family.

The protein resides in the secreted. The enzyme catalyses (1,4-alpha-D-galacturonosyl)n+m + H2O = (1,4-alpha-D-galacturonosyl)n + (1,4-alpha-D-galacturonosyl)m.. Its function is as follows. Involved in maceration and soft-rotting of plant tissue. Hydrolyzes the 1,4-alpha glycosidic bonds of de-esterified pectate in the smooth region of the plant cell wall. In Aspergillus oryzae (strain ATCC 42149 / RIB 40) (Yellow koji mold), this protein is Endopolygalacturonase B (pgaB).